An 872-amino-acid chain; its full sequence is Armadillo repeat-containing protein 3 (872 aa).

ARM repeat units follow at residues 15 to 54 (DVFD…KFAL), 57 to 96 (EENK…ILAS), 98 to 138 (NDVK…NMSA), 140 to 179 (YTSK…NLVQ), 181 to 220 (FQCR…VIAN), 222 to 262 (KESR…NCLE), 264 to 304 (MDTM…KAAY), 306 to 345 (PENR…AMCE), 346 to 385 (NSGS…NLTT), 388 to 427 (PANA…NMAM), 429 to 468 (EPLR…ATAC), and 470 to 509 (VEAR…VCAG). S-palmitoyl cysteine attachment occurs at residues Cys507 and Cys518. The disordered stretch occupies residues 610-693 (VSPPSSMEDK…SKGKKEEEKV (84 aa)). Positions 626 to 635 (RSISSSSSLR) are enriched in low complexity. Residues 636–646 (RSSKEKNKKNS) show a composition bias toward basic residues. Positions 675–693 (ATKEKGWRKSKGKKEEEKV) are enriched in basic and acidic residues.

As to quaternary structure, homodimer. Interacts with PIK3C3, PIK3R4 and BECN1. Interacts (via ARM domains) with ATG14. In terms of processing, palmitoylation is important for its function in autophagy. Expressed in skeletal muscle, brain, lung, kidney, prostate and testis. As to expression, mainly expressed in skeletal muscle, liver, spleen and thymus. In terms of tissue distribution, expressed only in the testis among normal tissues but is expressed frequently in various cancer tissues and, particularly, in pancreatic, lung and endometrial cancers.

Functionally, essential for male fertility and sperm motility. During spermatogenesis, promotes the autophagic degradation of excessive ribosomes, providing energy resources for mitochondria and thus ensuring sperm flagellar motility. The chain is Armadillo repeat-containing protein 3 (ARMC3) from Homo sapiens (Human).